Reading from the N-terminus, the 245-residue chain is Ribonuclease 3 (245 aa).

One can recognise an RNase III domain in the interval 19–148 (FKVFQEKIGI…FIGALYLDQG (130 aa)). Glutamate 61 serves as a coordination point for Mg(2+). The active site involves aspartate 65. Mg(2+) is bound by residues aspartate 134 and glutamate 137. Residue glutamate 137 is part of the active site. Positions 174–243 (DYKSQLQELI…AAEALKKLKE (70 aa)) constitute a DRBM domain.

This sequence belongs to the ribonuclease III family. Homodimer. Mg(2+) serves as cofactor.

The protein localises to the cytoplasm. It catalyses the reaction Endonucleolytic cleavage to 5'-phosphomonoester.. Digests double-stranded RNA. Involved in the processing of primary rRNA transcript to yield the immediate precursors to the large and small rRNAs (23S and 16S). Processes some mRNAs, and tRNAs when they are encoded in the rRNA operon. Processes pre-crRNA and tracrRNA of type II CRISPR loci if present in the organism. This is Ribonuclease 3 from Bacillus cereus (strain AH187).